Here is a 266-residue protein sequence, read N- to C-terminus: Glucosamine-6-phosphate deaminase (266 aa).

Catalysis depends on D72, which acts as the Proton acceptor; for enolization step. D141 acts as the For ring-opening step in catalysis. H143 acts as the Proton acceptor; for ring-opening step in catalysis. E148 acts as the For ring-opening step in catalysis.

This sequence belongs to the glucosamine/galactosamine-6-phosphate isomerase family. NagB subfamily. In terms of assembly, homohexamer; trimer of disulfide-linked dimers.

The enzyme catalyses alpha-D-glucosamine 6-phosphate + H2O = beta-D-fructose 6-phosphate + NH4(+). It functions in the pathway amino-sugar metabolism; N-acetylneuraminate degradation; D-fructose 6-phosphate from N-acetylneuraminate: step 5/5. Allosterically activated by N-acetylglucosamine 6-phosphate (GlcNAc6P). Functionally, catalyzes the reversible isomerization-deamination of glucosamine 6-phosphate (GlcN6P) to form fructose 6-phosphate (Fru6P) and ammonium ion. This Shigella boydii serotype 18 (strain CDC 3083-94 / BS512) protein is Glucosamine-6-phosphate deaminase.